The sequence spans 206 residues: Small ribosomal subunit protein uS5 (206 aa).

Polar residues predominate over residues M1–D15. Residues M1–W50 are disordered. The span at R38 to W50 shows a compositional bias: basic and acidic residues. The region spanning W50 to V113 is the S5 DRBM domain.

Belongs to the universal ribosomal protein uS5 family. In terms of assembly, part of the 30S ribosomal subunit. Contacts proteins S4 and S8.

Its function is as follows. With S4 and S12 plays an important role in translational accuracy. In terms of biological role, located at the back of the 30S subunit body where it stabilizes the conformation of the head with respect to the body. In Prochlorococcus marinus (strain AS9601), this protein is Small ribosomal subunit protein uS5.